The sequence spans 107 residues: Phosphoribosyl-ATP pyrophosphatase (107 aa).

It belongs to the PRA-PH family.

Its subcellular location is the cytoplasm. The catalysed reaction is 1-(5-phospho-beta-D-ribosyl)-ATP + H2O = 1-(5-phospho-beta-D-ribosyl)-5'-AMP + diphosphate + H(+). The protein operates within amino-acid biosynthesis; L-histidine biosynthesis; L-histidine from 5-phospho-alpha-D-ribose 1-diphosphate: step 2/9. The polypeptide is Phosphoribosyl-ATP pyrophosphatase (Bacillus cytotoxicus (strain DSM 22905 / CIP 110041 / 391-98 / NVH 391-98)).